The following is a 551-amino-acid chain: Serendipity locus protein alpha (551 aa).

It localises to the cytoplasm. The protein localises to the cell membrane. Functionally, required for the cellularization of the syncytial blastoderm embryo. Involved in the localization of the actin filaments just prior to and during plasma membrane invagination. Sry-alpha together with nullo and bnk may provide auxiliary functions, by acting both to stabilize a large and dynamic microfilament structure and regulate its functions. The sequence is that of Serendipity locus protein alpha (Sry-alpha) from Drosophila pseudoobscura pseudoobscura (Fruit fly).